A 137-amino-acid polypeptide reads, in one-letter code: Large ribosomal subunit protein uL16 (137 aa).

The protein belongs to the universal ribosomal protein uL16 family. In terms of assembly, part of the 50S ribosomal subunit.

Functionally, binds 23S rRNA and is also seen to make contacts with the A and possibly P site tRNAs. In Stenotrophomonas maltophilia (strain R551-3), this protein is Large ribosomal subunit protein uL16.